The chain runs to 491 residues: Calcium/calmodulin-dependent protein kinase type II delta 1 chain (491 aa).

The Protein kinase domain maps to 13–271 (YQLYEELGKG…AAEALKHPWI (259 aa)). ATP-binding positions include 19–27 (LGKGAFSVV) and K42. Residue D135 is the Proton acceptor of the active site. T286 carries the post-translational modification Phosphothreonine. Residue S314 is modified to Phosphoserine. The interval 315–354 (SKNPYKKPDGVKEPQTTVIHNPTDGNKESSESTNTTIEDE) is disordered. Residues 328–338 (PQTTVIHNPTD) show a composition bias toward polar residues. Residue T350 is modified to Phosphothreonine.

The protein belongs to the protein kinase superfamily. CAMK Ser/Thr protein kinase family. CaMK subfamily. CAMK2 is composed of four different chains: alpha, beta, gamma, and delta. The different isoforms assemble into homo- or heteromultimeric holoenzymes composed of 8 to 12 subunits. As to expression, first detected at the 18-somite stage where expression is restricted to somite boundaries. At 24 hpf, expression is elevated in epidermal tissue and in the hatching gland. After 24 hpf, expression dimishes, but persists at low levels along the dorsal trunk. At 48 hpf, expression is restricted at a low level to the forebrain. At 72 hpf, weak expression reappears along the entire dorsal trunk in discrete cell bodies.

The catalysed reaction is L-seryl-[protein] + ATP = O-phospho-L-seryl-[protein] + ADP + H(+). It catalyses the reaction L-threonyl-[protein] + ATP = O-phospho-L-threonyl-[protein] + ADP + H(+). With respect to regulation, autophosphorylation of CAMK2 plays an important role in the regulation of the kinase activity. In terms of biological role, caM-kinase II (CAMK2) is a prominent kinase in the central nervous system. This is Calcium/calmodulin-dependent protein kinase type II delta 1 chain from Danio rerio (Zebrafish).